The following is a 220-amino-acid chain: Deoxyribose-phosphate aldolase (220 aa).

Aspartate 89 functions as the Proton donor/acceptor in the catalytic mechanism. Lysine 151 acts as the Schiff-base intermediate with acetaldehyde in catalysis. Catalysis depends on lysine 180, which acts as the Proton donor/acceptor.

It belongs to the DeoC/FbaB aldolase family. DeoC type 1 subfamily.

The protein resides in the cytoplasm. It carries out the reaction 2-deoxy-D-ribose 5-phosphate = D-glyceraldehyde 3-phosphate + acetaldehyde. It functions in the pathway carbohydrate degradation; 2-deoxy-D-ribose 1-phosphate degradation; D-glyceraldehyde 3-phosphate and acetaldehyde from 2-deoxy-alpha-D-ribose 1-phosphate: step 2/2. In terms of biological role, catalyzes a reversible aldol reaction between acetaldehyde and D-glyceraldehyde 3-phosphate to generate 2-deoxy-D-ribose 5-phosphate. The sequence is that of Deoxyribose-phosphate aldolase from Staphylococcus epidermidis (strain ATCC 35984 / DSM 28319 / BCRC 17069 / CCUG 31568 / BM 3577 / RP62A).